A 632-amino-acid polypeptide reads, in one-letter code: Golgin subfamily A member 8N (632 aa).

The interval 1–76 (MAEETQHNKL…TSSATLKDLE (76 aa)) is disordered. Positions 38–50 (TNGSIPETATSGG) are enriched in polar residues. 2 coiled-coil regions span residues 85 to 150 (VLDS…TDLY) and 209 to 421 (ELEQ…SLMA). Disordered regions lie at residues 423 to 445 (PGEG…PMPS), 505 to 524 (DAAL…DEGE), and 552 to 573 (NSAD…ADKH). A compositionally biased stretch (gly residues) spans 508–520 (LGGGHHQAGAQGG).

The protein belongs to the GOLGA8 family.

This chain is Golgin subfamily A member 8N, found in Homo sapiens (Human).